Reading from the N-terminus, the 372-residue chain is Cytochrome b (372 aa).

A run of 4 helical transmembrane segments spans residues 25-45 (FGSMLLTCLAMQTLTGFFLAI), 69-90 (WTMQNLHAIGASMFFICIYIHI), 105-125 (WLSGITLLITLMATAFFGYVL), and 170-190 (FFALHFILPFIIISLTSIHII). Residues His-75 and His-89 each contribute to the heme b site. 2 residues coordinate heme b: His-174 and His-188. An a ubiquinone-binding site is contributed by His-193. The next 4 helical transmembrane spans lie at 218–238 (YKDMLMVTTMITLLFLILSFS), 280–300 (LGGTLALLMSIAILMTTPFTH), 312–332 (LTQILFWTLVATFITLTWTAT), and 339–358 (FIIISQMTSIFYFFFFIMNP).

Belongs to the cytochrome b family. The cytochrome bc1 complex contains 3 respiratory subunits (MT-CYB, CYC1 and UQCRFS1), 2 core proteins (UQCRC1 and UQCRC2) and probably 6 low-molecular weight proteins. Requires heme b as cofactor.

Its subcellular location is the mitochondrion inner membrane. Its function is as follows. Component of the ubiquinol-cytochrome c reductase complex (complex III or cytochrome b-c1 complex) that is part of the mitochondrial respiratory chain. The b-c1 complex mediates electron transfer from ubiquinol to cytochrome c. Contributes to the generation of a proton gradient across the mitochondrial membrane that is then used for ATP synthesis. This is Cytochrome b (MT-CYB) from Ophiophagus hannah (King cobra).